Consider the following 294-residue polypeptide: Acetylglutamate kinase (294 aa).

Substrate contacts are provided by residues 63–64 (GG), Arg85, and Asn188.

Belongs to the acetylglutamate kinase family. ArgB subfamily.

Its subcellular location is the cytoplasm. The enzyme catalyses N-acetyl-L-glutamate + ATP = N-acetyl-L-glutamyl 5-phosphate + ADP. It participates in amino-acid biosynthesis; L-arginine biosynthesis; N(2)-acetyl-L-ornithine from L-glutamate: step 2/4. In terms of biological role, catalyzes the ATP-dependent phosphorylation of N-acetyl-L-glutamate. The sequence is that of Acetylglutamate kinase from Methanococcus maripaludis (strain C5 / ATCC BAA-1333).